A 485-amino-acid polypeptide reads, in one-letter code: Glutamyl-tRNA(Gln) amidotransferase subunit A (485 aa).

Active-site charge relay system residues include Lys74 and Ser149. Ser173 serves as the catalytic Acyl-ester intermediate.

The protein belongs to the amidase family. GatA subfamily. Heterotrimer of A, B and C subunits.

The enzyme catalyses L-glutamyl-tRNA(Gln) + L-glutamine + ATP + H2O = L-glutaminyl-tRNA(Gln) + L-glutamate + ADP + phosphate + H(+). Its function is as follows. Allows the formation of correctly charged Gln-tRNA(Gln) through the transamidation of misacylated Glu-tRNA(Gln) in organisms which lack glutaminyl-tRNA synthetase. The reaction takes place in the presence of glutamine and ATP through an activated gamma-phospho-Glu-tRNA(Gln). The chain is Glutamyl-tRNA(Gln) amidotransferase subunit A from Herminiimonas arsenicoxydans.